The primary structure comprises 798 residues: Phenylalanine--tRNA ligase beta subunit (798 aa).

The 110-residue stretch at 39–148 (FDAIEPIVVG…ESFRIGARLV (110 aa)) folds into the tRNA-binding domain. Residues 402–478 (WQAPVLRFRR…RVRGMDTIEP (77 aa)) form the B5 domain. 4 residues coordinate Mg(2+): aspartate 456, aspartate 462, glutamate 465, and glutamate 466. An FDX-ACB domain is found at 708 to 798 (PVYPPVRRDI…SLVEKLPVRI (91 aa)).

It belongs to the phenylalanyl-tRNA synthetase beta subunit family. Type 1 subfamily. As to quaternary structure, tetramer of two alpha and two beta subunits. Requires Mg(2+) as cofactor.

It localises to the cytoplasm. It carries out the reaction tRNA(Phe) + L-phenylalanine + ATP = L-phenylalanyl-tRNA(Phe) + AMP + diphosphate + H(+). The sequence is that of Phenylalanine--tRNA ligase beta subunit from Nitratidesulfovibrio vulgaris (strain ATCC 29579 / DSM 644 / CCUG 34227 / NCIMB 8303 / VKM B-1760 / Hildenborough) (Desulfovibrio vulgaris).